The sequence spans 1361 residues: DNA-directed RNA polymerase subunit beta' (1361 aa).

The Zn(2+) site is built by C69, C71, C84, and C87. Residues D460, D462, and D464 each coordinate Mg(2+). Zn(2+)-binding residues include C808, C882, C889, and C892.

This sequence belongs to the RNA polymerase beta' chain family. As to quaternary structure, the RNAP catalytic core consists of 2 alpha, 1 beta, 1 beta' and 1 omega subunit. When a sigma factor is associated with the core the holoenzyme is formed, which can initiate transcription. Requires Mg(2+) as cofactor. The cofactor is Zn(2+).

The catalysed reaction is RNA(n) + a ribonucleoside 5'-triphosphate = RNA(n+1) + diphosphate. Functionally, DNA-dependent RNA polymerase catalyzes the transcription of DNA into RNA using the four ribonucleoside triphosphates as substrates. This chain is DNA-directed RNA polymerase subunit beta', found in Rickettsia bellii (strain RML369-C).